The following is a 395-amino-acid chain: ATP-dependent RNA helicase eIF4A (395 aa).

The Q motif motif lies at 22–50 (TSFDDLGLKDELLRGIYGYGFENPSSIQQ). One can recognise a Helicase ATP-binding domain in the interval 53-223 (ILPVIKGNDV…GKFMRDPVRI (171 aa)). An ATP-binding site is contributed by 66–73 (AQSGTGKT). The DEAD box motif lies at 171–174 (DEAD). Residues 234–395 (GIKQFYIDVE…EMPTNIADLI (162 aa)) enclose the Helicase C-terminal domain.

The protein belongs to the DEAD box helicase family. eIF4A subfamily. In terms of assembly, component of the eIF4F complex, which composition varies with external and internal environmental conditions. It is composed of at least eIF4A, eIF4E and eIF4G.

The protein localises to the cytoplasm. The catalysed reaction is ATP + H2O = ADP + phosphate + H(+). Its function is as follows. ATP-dependent RNA helicase which is a subunit of the eIF4F complex involved in cap recognition and is required for mRNA binding to ribosome. In the current model of translation initiation, eIF4A unwinds RNA secondary structures in the 5'-UTR of mRNAs which is necessary to allow efficient binding of the small ribosomal subunit, and subsequent scanning for the initiator codon. This is ATP-dependent RNA helicase eIF4A (TIF1) from Yarrowia lipolytica (strain CLIB 122 / E 150) (Yeast).